The chain runs to 204 residues: Glycerol-3-phosphate acyltransferase (204 aa).

4 helical membrane-spanning segments follow: residues 8–28 (NAQF…LLLA), 76–96 (GVLV…LWGI), 122–142 (MGVM…VWAL), and 166–186 (FILH…VLLY).

It belongs to the PlsY family. As to quaternary structure, probably interacts with PlsX.

The protein resides in the cell inner membrane. It carries out the reaction an acyl phosphate + sn-glycerol 3-phosphate = a 1-acyl-sn-glycero-3-phosphate + phosphate. Its pathway is lipid metabolism; phospholipid metabolism. In terms of biological role, catalyzes the transfer of an acyl group from acyl-phosphate (acyl-PO(4)) to glycerol-3-phosphate (G3P) to form lysophosphatidic acid (LPA). This enzyme utilizes acyl-phosphate as fatty acyl donor, but not acyl-CoA or acyl-ACP. In Sulfurimonas denitrificans (strain ATCC 33889 / DSM 1251) (Thiomicrospira denitrificans (strain ATCC 33889 / DSM 1251)), this protein is Glycerol-3-phosphate acyltransferase.